Here is a 346-residue protein sequence, read N- to C-terminus: MLNVAIVGASGYTGLELLRILYAHPQVAVTCVTSERSAGKRIDEVFPTLRDRCSLVLENLEPVRVSQKADLIFTALPHKAAMAVMPTFMELGKTVIDLSADYRLSDAEVYGAWYEPHLNPELLKSAVYGLPEIRRESIRGKKLVANPGCYPTSITLGLAPLLKNGMIDLKSIIADSASGVTGAGRGAKVDSLYCEVNEGYKAYGVGGVHRHTPEIEQELSLLAGEKVTLTFTPHLVPMDRGILSTIYATPLKGVTTEELNELYRNFYAEEPFVRVLPLGSLPSTAFVRGSNFCDIAPVVDKRTGRVIVVSAIDNLMKGASGQAVQNMNIVCGFYESAGLSGLALFP.

The active site involves cysteine 149.

Belongs to the NAGSA dehydrogenase family. Type 1 subfamily.

It localises to the cytoplasm. The catalysed reaction is N-acetyl-L-glutamate 5-semialdehyde + phosphate + NADP(+) = N-acetyl-L-glutamyl 5-phosphate + NADPH + H(+). It functions in the pathway amino-acid biosynthesis; L-arginine biosynthesis; N(2)-acetyl-L-ornithine from L-glutamate: step 3/4. Its function is as follows. Catalyzes the NADPH-dependent reduction of N-acetyl-5-glutamyl phosphate to yield N-acetyl-L-glutamate 5-semialdehyde. In Pelobacter propionicus (strain DSM 2379 / NBRC 103807 / OttBd1), this protein is N-acetyl-gamma-glutamyl-phosphate reductase.